We begin with the raw amino-acid sequence, 299 residues long: Glycine--tRNA ligase alpha subunit (299 aa).

This sequence belongs to the class-II aminoacyl-tRNA synthetase family. As to quaternary structure, tetramer of two alpha and two beta subunits.

It is found in the cytoplasm. It carries out the reaction tRNA(Gly) + glycine + ATP = glycyl-tRNA(Gly) + AMP + diphosphate. The chain is Glycine--tRNA ligase alpha subunit (glyQ) from Synechocystis sp. (strain ATCC 27184 / PCC 6803 / Kazusa).